Here is a 454-residue protein sequence, read N- to C-terminus: CCA-adding enzyme (454 aa).

Ser59 and Arg62 together coordinate ATP. CTP-binding residues include Ser59 and Arg62. Residues Asp71, Asp73, and Asp125 each contribute to the Mg(2+) site. Positions 148, 167, and 176 each coordinate ATP. CTP is bound by residues His148, Lys167, and Tyr176.

Belongs to the tRNA nucleotidyltransferase/poly(A) polymerase family. Archaeal CCA-adding enzyme subfamily. In terms of assembly, homodimer. The cofactor is Mg(2+).

The catalysed reaction is a tRNA precursor + 2 CTP + ATP = a tRNA with a 3' CCA end + 3 diphosphate. The enzyme catalyses a tRNA with a 3' CCA end + 2 CTP + ATP = a tRNA with a 3' CCACCA end + 3 diphosphate. Its function is as follows. Catalyzes the addition and repair of the essential 3'-terminal CCA sequence in tRNAs without using a nucleic acid template. Adds these three nucleotides in the order of C, C, and A to the tRNA nucleotide-73, using CTP and ATP as substrates and producing inorganic pyrophosphate. tRNA 3'-terminal CCA addition is required both for tRNA processing and repair. Also involved in tRNA surveillance by mediating tandem CCA addition to generate a CCACCA at the 3' terminus of unstable tRNAs. While stable tRNAs receive only 3'-terminal CCA, unstable tRNAs are marked with CCACCA and rapidly degraded. The protein is CCA-adding enzyme of Methanosarcina mazei (strain ATCC BAA-159 / DSM 3647 / Goe1 / Go1 / JCM 11833 / OCM 88) (Methanosarcina frisia).